The following is a 273-amino-acid chain: Shikimate dehydrogenase (NADP(+)) (273 aa).

Shikimate-binding positions include 14 to 16 (SKS) and T61. The Proton acceptor role is filled by K65. Positions 86 and 102 each coordinate shikimate. Residues 126 to 130 (GAGGA), 150 to 155 (NRTVAK), and M213 each bind NADP(+). Shikimate is bound at residue Y215. G237 is a binding site for NADP(+).

Belongs to the shikimate dehydrogenase family. Homodimer.

The enzyme catalyses shikimate + NADP(+) = 3-dehydroshikimate + NADPH + H(+). Its pathway is metabolic intermediate biosynthesis; chorismate biosynthesis; chorismate from D-erythrose 4-phosphate and phosphoenolpyruvate: step 4/7. In terms of biological role, involved in the biosynthesis of the chorismate, which leads to the biosynthesis of aromatic amino acids. Catalyzes the reversible NADPH linked reduction of 3-dehydroshikimate (DHSA) to yield shikimate (SA). This is Shikimate dehydrogenase (NADP(+)) from Tolumonas auensis (strain DSM 9187 / NBRC 110442 / TA 4).